Consider the following 485-residue polypeptide: Pumilio domain-containing protein 7 (485 aa).

Residues 29–72 (NKTHKNKNPKPPVKLLPYRHGSNTTSSDSDSYIFNSGSGSSDAE) are disordered. Residues 49–71 (GSNTTSSDSDSYIFNSGSGSSDA) show a composition bias toward polar residues. Pumilio repeat units lie at residues 86 to 124 (DVLL…AVFE), 128 to 163 (ESTT…ELLR), 164 to 200 (QMID…QLIQ), 201 to 236 (ELST…TFFV), 237 to 279 (HFLS…FRIQ), 287 to 324 (CIVR…TIID), 326 to 361 (CLLR…EMME), and 370 to 411 (DVES…RELP). Residues 439–454 (FSSGKKIIDSVMRHGV) are RNA-binding.

Functionally, RNA-binding protein that binds to the consensus sequence 5'-CUCUGUAUCUUGU-3' in mRNA 3'-UTRs and modulates mRNA expression and stability. Functions redundantly with puf-5 and puf-6 in oocyte formation and organization, early embryonic cell divisions, and repression of expression of glp-1 and other maternal mRNAs in late oogenesis. The chain is Pumilio domain-containing protein 7 from Caenorhabditis elegans.